A 352-amino-acid polypeptide reads, in one-letter code: Protein CIA1 (352 aa).

WD repeat units lie at residues 18-64, 72-111, 116-155, 161-200, 211-250, 265-303, and 315-352; these read GHTD…RSWT, THTRTVRSCAWSPSGQLLATASFDGTTGIWKNYGSEFECI, GHENEVKSVSWNASGSCLATCSRDKSVWIWEVLEGNEYDC, GHTQDVKMVQWHPTMDVLFSCSYDNTIKVWWSEDDDGEYQ, GHSSTVWSISFNAAGDKMVTCSDDLTLKIWGTDIAKMQSG, YHDRTIYSAHWSRDDIIASGAGDNAIRLFVDSKHDSVDG, and AHENDVNSVQWSPGEGNRLLASASDDGMVKIWQLATKP.

The protein belongs to the WD repeat CIA1 family. Part of a complex composed of AE7, CIA1, MMS19 and NAR1. Interacts with AE7 and NAR1.

It localises to the nucleus. The protein resides in the cytoplasm. Essential component of the cytosolic iron-sulfur (Fe-S) protein assembly (CIA) machinery. Required for the maturation of extramitochondrial Fe/S proteins. This is Protein CIA1 from Arabidopsis thaliana (Mouse-ear cress).